A 261-amino-acid chain; its full sequence is Short-chain dehydrogenase/reductase ARMGADRAFT_1018421 (261 aa).

Residues I21, D68, N95, K128, Y161, K165, V194, and T196 each coordinate NADP(+). Catalysis depends on Y161, which acts as the Proton acceptor. The Lowers pKa of active site Tyr role is filled by K165.

This sequence belongs to the short-chain dehydrogenases/reductases (SDR) family.

It participates in secondary metabolite biosynthesis. In terms of biological role, short-chain dehydrogenase/reductase, part of the gene cluster that mediates the biosynthesis of melleolides, a range of antifungal and phytotoxic polyketide derivatives composed of an orsellinic acid (OA) moiety esterified to various sesquiterpene alcohols. The first step in melleolides biosynthesis is performed by the delta(6)-protoilludene synthase PRO1 which catalyzes the cyclization of farnesyl diphosphate to protoilludene. The orsellinic acid synthase armB produces OA by condensing acetyl-CoA with 3 malonyl-CoA units in a three-round chain elongation reaction folowed by a C2-C7 ring closure. ArmB further catalyzes the trans-esterification of OA to the various sesquiterpene alcohols resulting from the hydroxylation of protoilludene. The melleolides cluster also includes 5 cytochrome P450 monooxygenases, 4 NAD(+)-dependent oxidoreductases, one flavin-dependent oxidoreductase, and one O-methyltransferase. The cytochrome P450 monooxygenases may be involved in protoilludene hydroxylation to elaborate melleolides with multiple alcohol groups, such as melleolide D, which carries alcohol functionalities at C-4, C-5, C-10, and C-13. The role of the NAD(+)-dependent enzymes remains unknown. Numerous melleolides, including arnamial, show 5'-O-methylation of the aromatic moiety which may be catalyzed by the methyltransferase encoded in the cluster. The flavin-dependent oxidoreductase might represent the dehydrogenase yielding the aldehyde in position 1 of arnamial and other melleolides. Finally, several halogenase localized outside of the cluster, are able to catalyze the transfer of a single chlorine atom to the melleolide backbone, resulting in a 6'-chloromelleolide product. In Armillaria gallica (Bulbous honey fungus), this protein is Short-chain dehydrogenase/reductase ARMGADRAFT_1018421.